The sequence spans 256 residues: MVALRLIPCLDVAHGRVVKGVNFVNLRDSGDPVELACRYSDEGADELVFLDIRASVENRNTLVDLVSRTAKSVKIPFTVGGGIDSVSSINDLLRAGADKVSLNSSAVRNPDLISKSSREFGNQCIVIAIDAKRKVNKTDEWEVYVKGGRENTGIDVLSWAKKVEELGAGEILLTSMDGDGTQNGYDLHLTESVANIVNIPVIASGGAGCLEDIYDVFNEGRASAALLASLLHDKKLSLREIKTFLLERKLPIRPYE.

Active-site residues include aspartate 11 and aspartate 130.

It belongs to the HisA/HisF family. Heterodimer of HisH and HisF.

Its subcellular location is the cytoplasm. It carries out the reaction 5-[(5-phospho-1-deoxy-D-ribulos-1-ylimino)methylamino]-1-(5-phospho-beta-D-ribosyl)imidazole-4-carboxamide + L-glutamine = D-erythro-1-(imidazol-4-yl)glycerol 3-phosphate + 5-amino-1-(5-phospho-beta-D-ribosyl)imidazole-4-carboxamide + L-glutamate + H(+). It functions in the pathway amino-acid biosynthesis; L-histidine biosynthesis; L-histidine from 5-phospho-alpha-D-ribose 1-diphosphate: step 5/9. Functionally, IGPS catalyzes the conversion of PRFAR and glutamine to IGP, AICAR and glutamate. The HisF subunit catalyzes the cyclization activity that produces IGP and AICAR from PRFAR using the ammonia provided by the HisH subunit. In Prochlorococcus marinus (strain MIT 9312), this protein is Imidazole glycerol phosphate synthase subunit HisF.